The sequence spans 408 residues: Acetate kinase (408 aa).

Position 7 (Asn-7) interacts with Mg(2+). Lys-14 serves as a coordination point for ATP. Residue Arg-91 coordinates substrate. Asp-148 acts as the Proton donor/acceptor in catalysis. ATP-binding positions include 208–212 (HLGNG), 283–285 (DFR), and 331–335 (GIGEN). Glu-384 is a binding site for Mg(2+).

Belongs to the acetokinase family. Homodimer. It depends on Mg(2+) as a cofactor. Mn(2+) serves as cofactor.

The protein localises to the cytoplasm. It carries out the reaction acetate + ATP = acetyl phosphate + ADP. Its pathway is metabolic intermediate biosynthesis; acetyl-CoA biosynthesis; acetyl-CoA from acetate: step 1/2. Its activity is regulated as follows. Inhibited by diethylpyrocarbonate, hydroxylamine and phenylglyoxal. Functionally, catalyzes the formation of acetyl phosphate from acetate and ATP. Can also catalyze the reverse reaction. Can also phosphorylate propionate, but has very low activity toward butyrate. The polypeptide is Acetate kinase (Methanosarcina thermophila).